Reading from the N-terminus, the 609-residue chain is Dihydroxy-acid dehydratase (609 aa).

Asp-81 lines the Mg(2+) pocket. Cys-122 is a binding site for [2Fe-2S] cluster. Residues Asp-123 and Lys-124 each coordinate Mg(2+). Residue Lys-124 is modified to N6-carboxylysine. Position 195 (Cys-195) interacts with [2Fe-2S] cluster. Glu-491 is a binding site for Mg(2+). Ser-517 acts as the Proton acceptor in catalysis.

Belongs to the IlvD/Edd family. As to quaternary structure, homodimer. The cofactor is [2Fe-2S] cluster. Mg(2+) is required as a cofactor.

It catalyses the reaction (2R)-2,3-dihydroxy-3-methylbutanoate = 3-methyl-2-oxobutanoate + H2O. The catalysed reaction is (2R,3R)-2,3-dihydroxy-3-methylpentanoate = (S)-3-methyl-2-oxopentanoate + H2O. It functions in the pathway amino-acid biosynthesis; L-isoleucine biosynthesis; L-isoleucine from 2-oxobutanoate: step 3/4. The protein operates within amino-acid biosynthesis; L-valine biosynthesis; L-valine from pyruvate: step 3/4. Its function is as follows. Functions in the biosynthesis of branched-chain amino acids. Catalyzes the dehydration of (2R,3R)-2,3-dihydroxy-3-methylpentanoate (2,3-dihydroxy-3-methylvalerate) into 2-oxo-3-methylpentanoate (2-oxo-3-methylvalerate) and of (2R)-2,3-dihydroxy-3-methylbutanoate (2,3-dihydroxyisovalerate) into 2-oxo-3-methylbutanoate (2-oxoisovalerate), the penultimate precursor to L-isoleucine and L-valine, respectively. The protein is Dihydroxy-acid dehydratase of Acinetobacter baumannii (strain AB0057).